Consider the following 285-residue polypeptide: ATP synthase gamma chain (285 aa).

This sequence belongs to the ATPase gamma chain family. In terms of assembly, F-type ATPases have 2 components, CF(1) - the catalytic core - and CF(0) - the membrane proton channel. CF(1) has five subunits: alpha(3), beta(3), gamma(1), delta(1), epsilon(1). CF(0) has three main subunits: a, b and c.

The protein localises to the cell membrane. In terms of biological role, produces ATP from ADP in the presence of a proton gradient across the membrane. The gamma chain is believed to be important in regulating ATPase activity and the flow of protons through the CF(0) complex. The sequence is that of ATP synthase gamma chain from Dehalococcoides mccartyi (strain ATCC BAA-2100 / JCM 16839 / KCTC 5957 / BAV1).